The chain runs to 180 residues: Inosine/xanthosine triphosphatase (180 aa).

Residue 8–13 participates in substrate binding; it reads TTNPAK. Mg(2+)-binding residues include Asp-38 and Glu-68. A substrate-binding site is contributed by 68 to 69; the sequence is EA.

Belongs to the YjjX NTPase family. In terms of assembly, homodimer. Requires Mg(2+) as cofactor. It depends on Mn(2+) as a cofactor.

The enzyme catalyses XTP + H2O = XDP + phosphate + H(+). It carries out the reaction ITP + H2O = IDP + phosphate + H(+). In terms of biological role, phosphatase that hydrolyzes non-canonical purine nucleotides such as XTP and ITP to their respective diphosphate derivatives. Probably excludes non-canonical purines from DNA/RNA precursor pool, thus preventing their incorporation into DNA/RNA and avoiding chromosomal lesions. This is Inosine/xanthosine triphosphatase from Yersinia pseudotuberculosis serotype IB (strain PB1/+).